The sequence spans 211 residues: Acyl-homoserine-lactone synthase (211 aa).

Belongs to the autoinducer synthase family.

The enzyme catalyses a fatty acyl-[ACP] + S-adenosyl-L-methionine = an N-acyl-L-homoserine lactone + S-methyl-5'-thioadenosine + holo-[ACP] + H(+). Its function is as follows. Required for the synthesis of OHHL (N-(3-oxohexanoyl)-L-homoserine lactone), an autoinducer molecule which binds to TraR and thus acts in the control of conjugal transfer. This is Acyl-homoserine-lactone synthase (traI) from Agrobacterium fabrum (strain C58 / ATCC 33970) (Agrobacterium tumefaciens (strain C58)).